A 143-amino-acid chain; its full sequence is Nucleoside diphosphate kinase (143 aa).

Lys-11, Phe-59, Arg-87, Thr-93, Arg-104, and Asn-114 together coordinate ATP. His-117 (pros-phosphohistidine intermediate) is an active-site residue.

This sequence belongs to the NDK family. In terms of assembly, homotetramer. It depends on Mg(2+) as a cofactor.

It localises to the cytoplasm. It catalyses the reaction a 2'-deoxyribonucleoside 5'-diphosphate + ATP = a 2'-deoxyribonucleoside 5'-triphosphate + ADP. The enzyme catalyses a ribonucleoside 5'-diphosphate + ATP = a ribonucleoside 5'-triphosphate + ADP. Functionally, major role in the synthesis of nucleoside triphosphates other than ATP. The ATP gamma phosphate is transferred to the NDP beta phosphate via a ping-pong mechanism, using a phosphorylated active-site intermediate. The protein is Nucleoside diphosphate kinase of Ectopseudomonas mendocina (strain ymp) (Pseudomonas mendocina).